We begin with the raw amino-acid sequence, 322 residues long: Phosphatidylserine decarboxylase proenzyme (322 aa).

Catalysis depends on charge relay system; for autoendoproteolytic cleavage activity residues D90, H147, and S254. The active-site Schiff-base intermediate with substrate; via pyruvic acid; for decarboxylase activity is S254. At S254 the chain carries Pyruvic acid (Ser); by autocatalysis. Residues 293-322 form a disordered region; sequence PDAEPAPLPAEEIEAEHDASPLIDDKKDQV. Basic and acidic residues predominate over residues 308-322; that stretch reads EHDASPLIDDKKDQV.

Belongs to the phosphatidylserine decarboxylase family. PSD-B subfamily. Prokaryotic type I sub-subfamily. Heterodimer of a large membrane-associated beta subunit and a small pyruvoyl-containing alpha subunit. Pyruvate is required as a cofactor. Post-translationally, is synthesized initially as an inactive proenzyme. Formation of the active enzyme involves a self-maturation process in which the active site pyruvoyl group is generated from an internal serine residue via an autocatalytic post-translational modification. Two non-identical subunits are generated from the proenzyme in this reaction, and the pyruvate is formed at the N-terminus of the alpha chain, which is derived from the carboxyl end of the proenzyme. The autoendoproteolytic cleavage occurs by a canonical serine protease mechanism, in which the side chain hydroxyl group of the serine supplies its oxygen atom to form the C-terminus of the beta chain, while the remainder of the serine residue undergoes an oxidative deamination to produce ammonia and the pyruvoyl prosthetic group on the alpha chain. During this reaction, the Ser that is part of the protease active site of the proenzyme becomes the pyruvoyl prosthetic group, which constitutes an essential element of the active site of the mature decarboxylase.

The protein resides in the cell membrane. The catalysed reaction is a 1,2-diacyl-sn-glycero-3-phospho-L-serine + H(+) = a 1,2-diacyl-sn-glycero-3-phosphoethanolamine + CO2. Its pathway is phospholipid metabolism; phosphatidylethanolamine biosynthesis; phosphatidylethanolamine from CDP-diacylglycerol: step 2/2. Catalyzes the formation of phosphatidylethanolamine (PtdEtn) from phosphatidylserine (PtdSer). In Escherichia coli O127:H6 (strain E2348/69 / EPEC), this protein is Phosphatidylserine decarboxylase proenzyme.